We begin with the raw amino-acid sequence, 321 residues long: MNIKSLLLGSAAALVAASGAQAADAIVAPEPEAVEYVRVCDAYGAGYFYIPGTETCLRVHGYVRYDVKGGDDVYSGTDRNGWDKGARFALMFNTNSETELGTLGTYTQLRFNYTSNNSRHDGQYGDFSDDRDVADGGVSTGKIAYTFTGGNGFSAVIALEQGGEDVDNDYTIDGYMPHVVGGLKYAGGWGSIAGVVAYDSVIEEWATKVRGDVNITDRFSVWLQGAYSSAATPNQNYGQWGGDWAVWGGAKFIAPEKATFNLQAAHDDWGKTAVTANVAYQLVPGFTITPEVSYTKFGGEWKDTVAEDNAWGGIVRFQRSF.

An N-terminal signal peptide occupies residues 1–22 (MNIKSLLLGSAAALVAASGAQA).

The protein belongs to the alphaproteobacteria porin family. Monomer.

It is found in the cell outer membrane. Its function is as follows. Forms passive diffusion pores that allow small molecular weight hydrophilic materials across the outer membrane. This Brucella abortus (strain S19) protein is Porin Omp2a (omp2a).